A 37-amino-acid chain; its full sequence is U4-theraphotoxin-Hhn1v (37 aa).

Intrachain disulfides connect cysteine 3–cysteine 17, cysteine 7–cysteine 28, and cysteine 22–cysteine 33.

This sequence belongs to the neurotoxin 12 (Hwtx-2) family. 02 (Hwtx-2) subfamily. Expressed by the venom gland.

It is found in the secreted. Postsynaptic neurotoxin. In Cyriopagopus hainanus (Chinese bird spider), this protein is U4-theraphotoxin-Hhn1v.